The sequence spans 473 residues: Photosystem II CP43 reaction center protein (473 aa).

Residues Met1 to Glu14 constitute a propeptide that is removed on maturation. N-acetylthreonine is present on Thr15. The residue at position 15 (Thr15) is a Phosphothreonine. A run of 5 helical transmembrane segments spans residues Leu69–Ala93, Leu134–Asn155, Lys178–Thr200, Lys255–Ser275, and Trp291–Ala312. Glu367 contributes to the [CaMn4O5] cluster binding site. The chain crosses the membrane as a helical span at residues Arg447–Pro471.

The protein belongs to the PsbB/PsbC family. PsbC subfamily. PSII is composed of 1 copy each of membrane proteins PsbA, PsbB, PsbC, PsbD, PsbE, PsbF, PsbH, PsbI, PsbJ, PsbK, PsbL, PsbM, PsbT, PsbX, PsbY, PsbZ, Psb30/Ycf12, at least 3 peripheral proteins of the oxygen-evolving complex and a large number of cofactors. It forms dimeric complexes. Requires Binds multiple chlorophylls and provides some of the ligands for the Ca-4Mn-5O cluster of the oxygen-evolving complex. It may also provide a ligand for a Cl- that is required for oxygen evolution. PSII binds additional chlorophylls, carotenoids and specific lipids. as cofactor.

It is found in the plastid. The protein localises to the chloroplast thylakoid membrane. In terms of biological role, one of the components of the core complex of photosystem II (PSII). It binds chlorophyll and helps catalyze the primary light-induced photochemical processes of PSII. PSII is a light-driven water:plastoquinone oxidoreductase, using light energy to abstract electrons from H(2)O, generating O(2) and a proton gradient subsequently used for ATP formation. The chain is Photosystem II CP43 reaction center protein from Phaseolus vulgaris (Kidney bean).